Consider the following 112-residue polypeptide: UPF0060 membrane protein AAur_4166 (112 aa).

4 helical membrane passes run 8 to 28 (ILFV…WQAV), 33 to 53 (AWWW…FAAF), 62 to 82 (VLAA…MLMD), and 91 to 111 (VIGA…PRPG).

It belongs to the UPF0060 family.

It localises to the cell membrane. The chain is UPF0060 membrane protein AAur_4166 from Paenarthrobacter aurescens (strain TC1).